A 222-amino-acid polypeptide reads, in one-letter code: Coiled-coil domain-containing protein 70 (222 aa).

2 coiled-coil regions span residues 34 to 62 (LQEE…WNFR) and 129 to 188 (NALW…KAAW).

In Bos taurus (Bovine), this protein is Coiled-coil domain-containing protein 70 (CCDC70).